The chain runs to 730 residues: Catalase-peroxidase (730 aa).

The tract at residues 1-25 is disordered; that stretch reads MEEKKCPVTGHTQHTPTGGGTKNKD. The segment at residues 95 to 218 is a cross-link (tryptophyl-tyrosyl-methioninium (Trp-Tyr) (with M-244)); the sequence is WHSAGTYRLN…LAAVQMGLIY (124 aa). The active-site Proton acceptor is H96. The tryptophyl-tyrosyl-methioninium (Tyr-Met) (with W-95) cross-link spans 218-244; the sequence is YVNPEGPNGQPSVLASGRDVRDTFKRM. H259 provides a ligand contact to heme b.

Belongs to the peroxidase family. Peroxidase/catalase subfamily. Homodimer or homotetramer. Heme b is required as a cofactor. Formation of the three residue Trp-Tyr-Met cross-link is important for the catalase, but not the peroxidase activity of the enzyme.

The enzyme catalyses H2O2 + AH2 = A + 2 H2O. The catalysed reaction is 2 H2O2 = O2 + 2 H2O. Its function is as follows. Bifunctional enzyme with both catalase and broad-spectrum peroxidase activity. In Desulfitobacterium hafniense (strain Y51), this protein is Catalase-peroxidase.